A 286-amino-acid chain; its full sequence is Bifunctional protein FolD (286 aa).

NADP(+) is bound by residues G165–S167 and S190.

It belongs to the tetrahydrofolate dehydrogenase/cyclohydrolase family. As to quaternary structure, homodimer.

It carries out the reaction (6R)-5,10-methylene-5,6,7,8-tetrahydrofolate + NADP(+) = (6R)-5,10-methenyltetrahydrofolate + NADPH. It catalyses the reaction (6R)-5,10-methenyltetrahydrofolate + H2O = (6R)-10-formyltetrahydrofolate + H(+). It participates in one-carbon metabolism; tetrahydrofolate interconversion. In terms of biological role, catalyzes the oxidation of 5,10-methylenetetrahydrofolate to 5,10-methenyltetrahydrofolate and then the hydrolysis of 5,10-methenyltetrahydrofolate to 10-formyltetrahydrofolate. In Staphylococcus aureus (strain bovine RF122 / ET3-1), this protein is Bifunctional protein FolD.